We begin with the raw amino-acid sequence, 436 residues long: Putative F-box/FBD/LRR-repeat protein At5g44960 (436 aa).

Residues 4–50 (CDYINELPDSLLTQILLDLRTKDSVKTSVSSKRWRNLWLNVPGLDLF) enclose the F-box domain. 2 LRR repeats span residues 287–310 (ISSV…SKLG) and 397–420 (SAVL…SYKK). The FBD domain maps to 355 to 407 (EENIDFHEVPQCLISTLEYVHINKLMMMEQSGIKLVNYFIENSAVLKKLTLRF).

This is Putative F-box/FBD/LRR-repeat protein At5g44960 from Arabidopsis thaliana (Mouse-ear cress).